The following is a 564-amino-acid chain: Proline--tRNA ligase (564 aa).

Belongs to the class-II aminoacyl-tRNA synthetase family. ProS type 1 subfamily. As to quaternary structure, homodimer.

It localises to the cytoplasm. It catalyses the reaction tRNA(Pro) + L-proline + ATP = L-prolyl-tRNA(Pro) + AMP + diphosphate. In terms of biological role, catalyzes the attachment of proline to tRNA(Pro) in a two-step reaction: proline is first activated by ATP to form Pro-AMP and then transferred to the acceptor end of tRNA(Pro). As ProRS can inadvertently accommodate and process non-cognate amino acids such as alanine and cysteine, to avoid such errors it has two additional distinct editing activities against alanine. One activity is designated as 'pretransfer' editing and involves the tRNA(Pro)-independent hydrolysis of activated Ala-AMP. The other activity is designated 'posttransfer' editing and involves deacylation of mischarged Ala-tRNA(Pro). The misacylated Cys-tRNA(Pro) is not edited by ProRS. The polypeptide is Proline--tRNA ligase (Bacillus velezensis (strain DSM 23117 / BGSC 10A6 / LMG 26770 / FZB42) (Bacillus amyloliquefaciens subsp. plantarum)).